Reading from the N-terminus, the 125-residue chain is Apolipoprotein C-IV (125 aa).

A signal peptide spans Met-1–Cys-27.

This sequence belongs to the apolipoprotein C4 family.

The protein resides in the secreted. Functionally, may participate in lipoprotein metabolism. The protein is Apolipoprotein C-IV (APOC4) of Plecturocebus moloch (Dusky titi monkey).